The sequence spans 153 residues: Ribonuclease H (153 aa).

The RNase H type-1 domain occupies 1 to 141; that stretch reads MKKIQLFTDG…CDDLARRAAE (141 aa). Mg(2+) is bound by residues aspartate 9, glutamate 47, aspartate 69, and aspartate 133.

The protein belongs to the RNase H family. In terms of assembly, monomer. Mg(2+) serves as cofactor.

The protein localises to the cytoplasm. It catalyses the reaction Endonucleolytic cleavage to 5'-phosphomonoester.. Functionally, endonuclease that specifically degrades the RNA of RNA-DNA hybrids. The chain is Ribonuclease H from Psychromonas ingrahamii (strain DSM 17664 / CCUG 51855 / 37).